Reading from the N-terminus, the 359-residue chain is Outer membrane protein assembly factor BamC (359 aa).

Positions 1-21 (MSTLNKYKTLIIISSLAAVSS) are cleaved as a signal peptide. C22 carries N-palmitoyl cysteine lipidation. A lipid anchor (S-diacylglycerol cysteine) is attached at C22.

It belongs to the BamC family. As to quaternary structure, part of the Bam complex.

Its subcellular location is the cell outer membrane. Functionally, part of the outer membrane protein assembly complex, which is involved in assembly and insertion of beta-barrel proteins into the outer membrane. This Kangiella koreensis (strain DSM 16069 / JCM 12317 / KCTC 12182 / SW-125) protein is Outer membrane protein assembly factor BamC.